The following is a 471-amino-acid chain: T-box transcription factor T (471 aa).

Residues 24-196 (LWTKFCSLTN…HNPFAKAFLD (173 aa)) constitute a DNA-binding region (T-box).

In terms of tissue distribution, developing notochord.

Its subcellular location is the nucleus. In terms of biological role, involved in the transcriptional regulation of genes required for mesoderm differentiation. In Halocynthia roretzi (Sea squirt), this protein is T-box transcription factor T.